Reading from the N-terminus, the 1308-residue chain is Limbin (1308 aa).

An N-terminal signal peptide occupies residues 1 to 26 (MDPSGSRGRPTWVLAGGLLAVALALG). Residues 27 to 300 (GRGCLGASSR…VLPHHGLHAA (274 aa)) lie on the Extracellular side of the membrane. Positions 36–76 (RPRWRPLGAQPPRDPQVAPRSGPGLRIPPGRSGAGPESSTQ) are disordered. N220 is a glycosylation site (N-linked (GlcNAc...) asparagine). The chain crosses the membrane as a helical span at residues 301–321 (GFFIAFLLSLVLTWAALFLMV). The Cytoplasmic portion of the chain corresponds to 322-1308 (RYQCLKGNML…KKAMRALGMD (987 aa)). Coiled-coil stretches lie at residues 455-578 (TAEC…ELMD), 636-800 (DQME…DRDQ), and 1001-1113 (ASEM…EADT). Over residues 784 to 801 (MAARAEQLEGEERDRDQE) the composition is skewed to basic and acidic residues. Residues 784–816 (MAARAEQLEGEERDRDQEGVQSVRQRLKDDAPE) are disordered.

Component of the EvC complex composed of EFCAB7, IQCE, EVC2 and EVC; built from two subcomplexes, EVC2:EVC and EFCAB7:IQCE. Interacts with EVC. Interacts (via N-terminal end) with EFCAB7. Interacts (via N-terminal end) with IQCE. As to expression, found in the heart, placenta, lung, liver, skeletal muscle, kidney and pancreas.

Its subcellular location is the cell membrane. The protein localises to the cytoplasm. It localises to the cytoskeleton. The protein resides in the cilium basal body. It is found in the cell projection. Its subcellular location is the cilium. The protein localises to the cilium membrane. It localises to the nucleus. Its function is as follows. Component of the EvC complex that positively regulates ciliary Hedgehog (Hh) signaling. Plays a critical role in bone formation and skeletal development. May be involved in early embryonic morphogenesis. This Homo sapiens (Human) protein is Limbin (EVC2).